Consider the following 156-residue polypeptide: Endoribonuclease YbeY (156 aa).

Zn(2+)-binding residues include H119, H123, and H129.

It belongs to the endoribonuclease YbeY family. The cofactor is Zn(2+).

The protein localises to the cytoplasm. Single strand-specific metallo-endoribonuclease involved in late-stage 70S ribosome quality control and in maturation of the 3' terminus of the 16S rRNA. The polypeptide is Endoribonuclease YbeY (Buchnera aphidicola subsp. Cinara cedri (strain Cc)).